A 139-amino-acid chain; its full sequence is Actin-depolymerizing factor 6 (139 aa).

In terms of domain architecture, ADF-H spans 5–139; the sequence is ASGMAVGDEC…SMDIVKARAL (135 aa).

The protein belongs to the actin-binding proteins ADF family.

In terms of biological role, actin-depolymerizing protein. Severs actin filaments (F-actin) and binds to actin monomers. The chain is Actin-depolymerizing factor 6 (ADF6) from Oryza sativa subsp. japonica (Rice).